We begin with the raw amino-acid sequence, 407 residues long: Melanoma-associated antigen B6 (407 aa).

A disordered region spans residues 1 to 175 (MPRGHKSKLR…YDVAAEGEDE (175 aa)). Polar residues-rich tracts occupy residues 18-29 (TNGQPQGLTGPQ), 57-71 (DASI…SPTG), 94-113 (PSTS…SPTG), and 136-155 (PSTS…SPTG). Residues 195 to 394 (VKKKACTLAQ…GLYPHLYEDA (200 aa)) enclose the MAGE domain.

As to expression, expressed in testis. Not expressed in other normal tissues, but is expressed in tumors of different histological origins.

The chain is Melanoma-associated antigen B6 (MAGEB6) from Homo sapiens (Human).